The following is a 219-amino-acid chain: Large ribosomal subunit protein uL3 (219 aa).

Residues 133–145 (GRASHGNSRSHNV) show a composition bias toward polar residues. Residues 133–153 (GRASHGNSRSHNVPGSIGMAQ) form a disordered region. An N5-methylglutamine modification is found at Q153.

The protein belongs to the universal ribosomal protein uL3 family. In terms of assembly, part of the 50S ribosomal subunit. Forms a cluster with proteins L14 and L19. Post-translationally, methylated by PrmB.

One of the primary rRNA binding proteins, it binds directly near the 3'-end of the 23S rRNA, where it nucleates assembly of the 50S subunit. The polypeptide is Large ribosomal subunit protein uL3 (Paraburkholderia phymatum (strain DSM 17167 / CIP 108236 / LMG 21445 / STM815) (Burkholderia phymatum)).